The chain runs to 121 residues: Large ribosomal subunit protein bL12 (121 aa).

Belongs to the bacterial ribosomal protein bL12 family. As to quaternary structure, homodimer. Part of the ribosomal stalk of the 50S ribosomal subunit. Forms a multimeric L10(L12)X complex, where L10 forms an elongated spine to which 2 to 4 L12 dimers bind in a sequential fashion. Binds GTP-bound translation factors.

Functionally, forms part of the ribosomal stalk which helps the ribosome interact with GTP-bound translation factors. Is thus essential for accurate translation. This is Large ribosomal subunit protein bL12 from Escherichia coli O45:K1 (strain S88 / ExPEC).